An 890-amino-acid polypeptide reads, in one-letter code: DNA mismatch repair protein MutS (890 aa).

An ATP-binding site is contributed by 607 to 614 (GPNMSGKS). The segment at 832 to 851 (ESQLSFFGTEQSSKKQDKPV) is disordered.

The protein belongs to the DNA mismatch repair MutS family.

In terms of biological role, this protein is involved in the repair of mismatches in DNA. It is possible that it carries out the mismatch recognition step. This protein has a weak ATPase activity. This Bacillus cereus (strain 03BB102) protein is DNA mismatch repair protein MutS.